Consider the following 123-residue polypeptide: Small ribosomal subunit protein bS16 (123 aa).

This sequence belongs to the bacterial ribosomal protein bS16 family.

This chain is Small ribosomal subunit protein bS16, found in Treponema pallidum (strain Nichols).